The primary structure comprises 218 residues: Small ribosomal subunit protein uS3 (218 aa).

The 69-residue stretch at 38 to 106 folds into the KH type-2 domain; the sequence is IREFISKRLS…RVHINILEIK (69 aa).

This sequence belongs to the universal ribosomal protein uS3 family. In terms of assembly, part of the 30S ribosomal subunit. Forms a tight complex with proteins S10 and S14.

Binds the lower part of the 30S subunit head. Binds mRNA in the 70S ribosome, positioning it for translation. This chain is Small ribosomal subunit protein uS3, found in Bacillus velezensis (strain DSM 23117 / BGSC 10A6 / LMG 26770 / FZB42) (Bacillus amyloliquefaciens subsp. plantarum).